Here is a 272-residue protein sequence, read N- to C-terminus: Orotidine 5'-phosphate decarboxylase (272 aa).

The active-site Proton donor is Lys-93.

The protein belongs to the OMP decarboxylase family. Type 2 subfamily.

It catalyses the reaction orotidine 5'-phosphate + H(+) = UMP + CO2. It participates in pyrimidine metabolism; UMP biosynthesis via de novo pathway; UMP from orotate: step 2/2. The protein is Orotidine 5'-phosphate decarboxylase of Roseiflexus castenholzii (strain DSM 13941 / HLO8).